A 95-amino-acid polypeptide reads, in one-letter code: Small ribosomal subunit protein bS18 (95 aa).

This sequence belongs to the bacterial ribosomal protein bS18 family. As to quaternary structure, part of the 30S ribosomal subunit. Forms a tight heterodimer with protein bS6.

Binds as a heterodimer with protein bS6 to the central domain of the 16S rRNA, where it helps stabilize the platform of the 30S subunit. In Ehrlichia canis (strain Jake), this protein is Small ribosomal subunit protein bS18.